The primary structure comprises 345 residues: Protein GAMETE CELL DEFECTIVE 1, mitochondrial (345 aa).

The N-terminal 43 residues, 1–43 (MLALRKTLLHGRLPAAPPAAAAAAIASRIPALLRRLSSSPGDG), are a transit peptide targeting the mitochondrion. The tract at residues 36-82 (LSSSPGDGQGGDEWGSSWSTGITKEHFDGSDAAVGRPVTSPSKPVSP) is disordered.

The protein localises to the mitochondrion. Its function is as follows. Essential for fertility (male and female gametophyte functions and development). Required for the integrity of female gametic mitochondria. Involved in embryo apical-basal patterning, and particularly dorsal-ventral patterning, during early embryogenesis, and endosperm free nucleus positioning and development as well as early endosperm development, probably by modulating the expression pattern of related genes (e.g. AL1, MYB3/AL2, CYP78A13/GE, PNH1, HAZ1, MPK6 and OSH1). Has function in triggering of endosperm programmed cell death (PCD) leading to syncytial endosperm cellularization and starchy endosperm cell maturation. Implicated in central vacuole dynamics necessary for microspore development leading to pollen production, and for pollen development and germination. This is Protein GAMETE CELL DEFECTIVE 1, mitochondrial from Oryza sativa subsp. indica (Rice).